A 618-amino-acid polypeptide reads, in one-letter code: Tyrosine-protein kinase ZAP-70 (618 aa).

Positions 10 to 102 constitute an SH2 1 domain; sequence FFYGSISRAE…GLPCNLRKPC (93 aa). The segment at 103-162 is interdomain A; the sequence is NRPPGLEPQPGVFDCLRDAMVRDYVRQTWKLEGDALEQAIISQAPQVEKLIATTAHERMP. Positions 163-254 constitute an SH2 2 domain; that stretch reads WYHSSLTREE…GLIYRLKEVC (92 aa). A Phosphotyrosine modification is found at Y248. Residues 255–336 form an interdomain B region; that stretch reads PNSSASAAVA…KKLFLKRENL (82 aa). The tract at residues 270–320 is disordered; it reads AHPSTFTQPQRRVDTLNSDGYTPEPARLASSTDKPRPMPMDTSVYESPYSD. Polar residues predominate over residues 273–289; it reads STFTQPQRRVDTLNSDG. Position 287 is a phosphoserine (S287). Y290 carries the phosphotyrosine modification. Residue Y314 is modified to Phosphotyrosine; by LCK. Phosphotyrosine is present on Y318. A Protein kinase domain is found at 337–597; that stretch reads LVADIELGCG…VEQRMRNYYY (261 aa). Residues 343–351 and K368 contribute to the ATP site; that span reads LGCGNFGSV. D460 functions as the Proton acceptor in the catalytic mechanism. 2 positions are modified to phosphotyrosine: Y491 and Y492. A Glycyl lysine isopeptide (Lys-Gly) (interchain with G-Cter in ubiquitin) cross-link involves residue K543.

This sequence belongs to the protein kinase superfamily. Tyr protein kinase family. SYK/ZAP-70 subfamily. Interacts with CD247/CD3Z; this interaction docks ZAP70 at the stimulated TCR. Interacts with NFAM1. Interacts with adapter protein SLA; this interaction negatively regulates T-cell receptor signaling. Interacts with VAV1. Interacts with CBL; this interaction promotes ubiquitination, internalization and subsequent degradation of CD247/CD3Z. Identified in a complex with CBL and UBE2L3. Interacts with SHB. Interacts with adapter protein SLA2; this interaction negatively regulates T-cell receptor signaling. Interacts with CBLB. Interacts (via SH2 domains) with RHOH; this interaction regulates ZAP70 subcellular localization. Interacts with DEF6. Interacts (ubiquitinated form) with OTUD7B and UBASH3B. Phosphorylated on tyrosine residues upon T-cell antigen receptor (TCR) stimulation. Phosphorylation of Tyr-314 and Tyr-314 are essential for ZAP70 positive function on T-lymphocyte activation whereas Tyr-290 has a negative regulatory role. Within the C-terminal kinase domain, Tyr-491 and Tyr-492 are phosphorylated after TCR induction, Tyr-491 playing a negative regulatory role and Tyr-492 a positive. Tyr-492 is dephosphorylated by PTN22. Post-translationally, ubiquitinated in response to T cell activation. Deubiquitinated by OTUD7B. In terms of tissue distribution, isoform 1 and isoform 2 are expressed in thymus, spleen and lymph nodes.

The protein localises to the cytoplasm. The protein resides in the cell membrane. It catalyses the reaction L-tyrosyl-[protein] + ATP = O-phospho-L-tyrosyl-[protein] + ADP + H(+). Its activity is regulated as follows. Activated by phosphorylation at Tyr-492 in the activation loop. Its function is as follows. Tyrosine kinase that plays an essential role in regulation of the adaptive immune response. Regulates motility, adhesion and cytokine expression of mature T-cells, as well as thymocyte development. Also contributes to the development and activation of primary B-lymphocytes. When antigen presenting cells (APC) activate T-cell receptor (TCR), a serie of phosphorylations lead to the recruitment of ZAP70 to the doubly phosphorylated TCR component CD3Z through ITAM motif at the plasma membrane. This recruitment serves to localization to the stimulated TCR and to relieve its autoinhibited conformation. Release of ZAP70 active conformation is further stabilized by phosphorylation mediated by LCK. Subsequently, ZAP70 phosphorylates at least 2 essential adapter proteins: LAT and LCP2. In turn, a large number of signaling molecules are recruited and ultimately lead to lymphokine production, T-cell proliferation and differentiation. Furthermore, ZAP70 controls cytoskeleton modifications, adhesion and mobility of T-lymphocytes, thus ensuring correct delivery of effectors to the APC. ZAP70 is also required for TCR-CD3Z internalization and degradation through interaction with the E3 ubiquitin-protein ligase CBL and adapter proteins SLA and SLA2. Thus, ZAP70 regulates both T-cell activation switch on and switch off by modulating TCR expression at the T-cell surface. During thymocyte development, ZAP70 promotes survival and cell-cycle progression of developing thymocytes before positive selection (when cells are still CD4/CD8 double negative). Additionally, ZAP70-dependent signaling pathway may also contribute to primary B-cells formation and activation through B-cell receptor (BCR). The chain is Tyrosine-protein kinase ZAP-70 (Zap70) from Mus musculus (Mouse).